We begin with the raw amino-acid sequence, 133 residues long: Small ribosomal subunit protein uS8 (133 aa).

This sequence belongs to the universal ribosomal protein uS8 family. In terms of assembly, part of the 30S ribosomal subunit. Contacts proteins S5 and S12.

One of the primary rRNA binding proteins, it binds directly to 16S rRNA central domain where it helps coordinate assembly of the platform of the 30S subunit. This chain is Small ribosomal subunit protein uS8, found in Leptospira borgpetersenii serovar Hardjo-bovis (strain JB197).